The chain runs to 1748 residues: WD repeat-containing protein 90 (1748 aa).

The interval 1 to 207 is binds with microtubules; it reads MARAWQHPFL…VTPMPREMAF (207 aa). S241 bears the Phosphoserine mark. The disordered stretch occupies residues 274 to 308; that stretch reads QTPSPTASGRAALAPRPFPEVSLSQERSDASNADG. 21 WD repeats span residues 407 to 450, 452 to 494, 501 to 541, 615 to 654, 656 to 695, 698 to 737, 740 to 779, 782 to 821, 882 to 922, 926 to 964, 969 to 1009, 1156 to 1201, 1204 to 1245, 1247 to 1286, 1298 to 1326, 1327 to 1376, 1433 to 1472, 1475 to 1520, 1523 to 1562, 1568 to 1614, and 1715 to 1748; these read GHTD…CLFR, PMHV…LGGE, AHTD…LRSC, SSGP…VLLE, EHEG…YHML, SHTA…QLYD, SSED…VLVE, CHRG…WHVL, SRLD…IIRE, VHPE…SPGP, GHSE…QSFP, GHSA…CQHL, PHST…LVSS, RLPE…ADIS, VGAG…VCVW, DTRA…ELRC, GHRS…LVIQ, VLNQ…MELK, PHPV…TFRV, GAPI…NHCE, and GHDN…VPGL. Residues 1004 to 1071 form a disordered region; sequence SDQSFPGAPP…GARDTRNSGA (68 aa).

It belongs to the WD repeat WDR90/POC16 family.

The protein resides in the cytoplasm. Its subcellular location is the cytoskeleton. It localises to the microtubule organizing center. It is found in the centrosome. The protein localises to the centriole. The protein resides in the centriolar satellite. Microtubule-binding protein that plays a crucial role in ensuring inner core protein localization within the centriole core, as well as in maintaining the microtubule wall integrity and the overall centriole roundness and stability. Required for efficient primary cilium formation. The chain is WD repeat-containing protein 90 (WDR90) from Homo sapiens (Human).